Consider the following 383-residue polypeptide: Erythronate-4-phosphate dehydrogenase (383 aa).

Residues Ser45 and Thr66 each contribute to the substrate site. Positions 146 and 175 each coordinate NAD(+). Arg208 is an active-site residue. Asp232 lines the NAD(+) pocket. The active site involves Glu237. His254 serves as the catalytic Proton donor. Residue Gly257 participates in NAD(+) binding.

It belongs to the D-isomer specific 2-hydroxyacid dehydrogenase family. PdxB subfamily. As to quaternary structure, homodimer.

It is found in the cytoplasm. The catalysed reaction is 4-phospho-D-erythronate + NAD(+) = (R)-3-hydroxy-2-oxo-4-phosphooxybutanoate + NADH + H(+). The protein operates within cofactor biosynthesis; pyridoxine 5'-phosphate biosynthesis; pyridoxine 5'-phosphate from D-erythrose 4-phosphate: step 2/5. Functionally, catalyzes the oxidation of erythronate-4-phosphate to 3-hydroxy-2-oxo-4-phosphonooxybutanoate. This is Erythronate-4-phosphate dehydrogenase from Chromohalobacter salexigens (strain ATCC BAA-138 / DSM 3043 / CIP 106854 / NCIMB 13768 / 1H11).